The sequence spans 64 residues: Large ribosomal subunit protein bL35 (64 aa).

The segment covering 1 to 45 has biased composition (basic residues); sequence MPKMKTHKGAAKRFKKTGKGKIKRRKAFKSHILTKKTPKRKRNLR. The interval 1 to 64 is disordered; that stretch reads MPKMKTHKGA…EEKRIKRLLP (64 aa).

This sequence belongs to the bacterial ribosomal protein bL35 family.

The chain is Large ribosomal subunit protein bL35 from Natranaerobius thermophilus (strain ATCC BAA-1301 / DSM 18059 / JW/NM-WN-LF).